The chain runs to 393 residues: Major outer membrane porin, serovar D (393 aa).

A signal peptide spans 1–22 (MKKLLKSVLVFAALSSASSLQA).

It belongs to the chlamydial porin (CP) (TC 1.B.2) family. Part of a disulfide cross-linked outer membrane complex (COMC) composed of the major outer membrane porin (MOMP), the small cysteine-rich protein (OmcA) and the large cysteine-rich periplasmic protein (OmcB).

The protein localises to the cell outer membrane. In elementary bodies (EBs, the infectious stage, which is able to survive outside the host cell) provides the structural integrity of the outer envelope through disulfide cross-links with the small cysteine-rich protein and the large cysteine-rich periplasmic protein. It has been described in publications as the Sarkosyl-insoluble COMC (Chlamydia outer membrane complex), and serves as the functional equivalent of peptidoglycan. In terms of biological role, permits diffusion of specific solutes through the outer membrane. This Chlamydia trachomatis serovar D (strain ATCC VR-885 / DSM 19411 / UW-3/Cx) protein is Major outer membrane porin, serovar D (ompA).